The sequence spans 642 residues: MPVITLPDGSKREFANPVSTLDVAADIGPGLAKACIAGRVNGELKDACDIIETDSELSIITAKDEEGVEILRHSCAHLLGHAIKQLFPETKMAIGPVIDNGFYYDIDLDHKLTQEDIDALEKRMAALAKTNYAVDKRVVSWQEARDTFEARGEDYKMAILDENIPKDSTPALYHHEEYIDMCRGPHVPNMKFCQNFKLMSVAGAYWRGNSDNKMLQRVYGTAWADKKALKVHLNRLEEAAKRDHRKIGKQLDLYHMQEEAPGMVFWHNDGWSLFLELEKFIRQKLGQYTYQEVKGPLMMDRVLWERSGHWDKYSDAMFTTSSENREYAIKPMNCPGHVQIFNQGLKSYRDLPLRMAEFGCCHRNEPSGSLHGLMRVRGFTQDDAHIFCTEEQVQQEVSACIRMVYDTYATFGFSNIVVKLSTRPEKRIGDDDMWDRAEEALKKALKANDIEFEILPGEGAFYGPKIEFTLHDCLDRAWQCGTVQLDYALPGRLGATYVAEDNSRQTPVMIHRAILGSLERFLGILIEEYAGKFPAWLSPVQVVVMNITDKQSDYVDNVVNLFKEHGIRATKDLRNEKIGFKIREHTLRRVPYLLVVGDQEMENNEVAVRTREGVDLGKMQLEEFATKLKNQISLRSLNLLED.

A TGS domain is found at 1 to 61; sequence MPVITLPDGS…ETDSELSIIT (61 aa). The segment at 243–534 is catalytic; sequence DHRKIGKQLD…LIEEYAGKFP (292 aa). Zn(2+) contacts are provided by Cys334, His385, and His511.

The protein belongs to the class-II aminoacyl-tRNA synthetase family. Homodimer. It depends on Zn(2+) as a cofactor.

The protein resides in the cytoplasm. It carries out the reaction tRNA(Thr) + L-threonine + ATP = L-threonyl-tRNA(Thr) + AMP + diphosphate + H(+). Functionally, catalyzes the attachment of threonine to tRNA(Thr) in a two-step reaction: L-threonine is first activated by ATP to form Thr-AMP and then transferred to the acceptor end of tRNA(Thr). Also edits incorrectly charged L-seryl-tRNA(Thr). The sequence is that of Threonine--tRNA ligase from Shewanella halifaxensis (strain HAW-EB4).